Consider the following 184-residue polypeptide: GTP cyclohydrolase 1 (184 aa).

Positions 74, 77, and 145 each coordinate Zn(2+).

Belongs to the GTP cyclohydrolase I family. Toroid-shaped homodecamer, composed of two pentamers of five dimers.

The enzyme catalyses GTP + H2O = 7,8-dihydroneopterin 3'-triphosphate + formate + H(+). The protein operates within cofactor biosynthesis; 7,8-dihydroneopterin triphosphate biosynthesis; 7,8-dihydroneopterin triphosphate from GTP: step 1/1. The chain is GTP cyclohydrolase 1 (folE) from Aquifex aeolicus (strain VF5).